A 935-amino-acid chain; its full sequence is Phosphoenolpyruvate carboxylase (935 aa).

Catalysis depends on residues H161 and K593.

The protein belongs to the PEPCase type 1 family. Requires Mg(2+) as cofactor.

It catalyses the reaction oxaloacetate + phosphate = phosphoenolpyruvate + hydrogencarbonate. Forms oxaloacetate, a four-carbon dicarboxylic acid source for the tricarboxylic acid cycle. The sequence is that of Phosphoenolpyruvate carboxylase from Mycobacterium avium (strain 104).